Consider the following 219-residue polypeptide: Ribonuclease HII (219 aa).

The 210-residue stretch at 10–219 (HLEAGTDEAG…LLPEQTVLDL (210 aa)) folds into the RNase H type-2 domain. Positions 16, 17, and 108 each coordinate a divalent metal cation.

The protein belongs to the RNase HII family. It depends on Mn(2+) as a cofactor. Mg(2+) is required as a cofactor.

The protein localises to the cytoplasm. It catalyses the reaction Endonucleolytic cleavage to 5'-phosphomonoester.. Endonuclease that specifically degrades the RNA of RNA-DNA hybrids. This Flavobacterium psychrophilum (strain ATCC 49511 / DSM 21280 / CIP 103535 / JIP02/86) protein is Ribonuclease HII.